Here is a 79-residue protein sequence, read N- to C-terminus: Immunity protein CdiI (79 aa).

2 helical membrane-spanning segments follow: residues 12–32 (IIFF…IGLI) and 51–71 (VVLF…LGLW).

Probably interacts with cognate toxin CdiA.

The protein localises to the cell inner membrane. Functionally, immunity protein component of a toxin-immunity protein module, which functions as a cellular contact-dependent growth inhibition (CDI) system. CDI modules allow bacteria to communicate with and inhibit the growth of closely related neighboring bacteria in a contact-dependent fashion. Protects cells against CdiA from the same strain, its cognate toxin protein. Growth inhibition is reversible upon induction of this protein, occurring about 2.5 hours after induction, and requires an energy source. Does not protect against non-cognate CdiA from E.coli strain 563 / UPEC, D.dadantii strain 3937 or Y.pestis strain CO92. The protein is Immunity protein CdiI of Escherichia coli.